The primary structure comprises 458 residues: BUD13 homolog (458 aa).

3 disordered regions span residues Ser-16–Arg-37, Lys-81–Leu-328, and Ala-437–Glu-458. A compositionally biased stretch (basic and acidic residues) spans Asn-138–Pro-148. Basic residues-rich tracts occupy residues Arg-175–Arg-185 and Pro-208–Arg-218. Basic and acidic residues-rich tracts occupy residues Arg-219–Glu-243, Arg-266–Glu-284, and Asp-314–Leu-328. The stretch at Leu-262–Ala-356 forms a coiled coil.

Belongs to the CWC26 family.

The polypeptide is BUD13 homolog (Caenorhabditis elegans).